Here is a 268-residue protein sequence, read N- to C-terminus: Regulatory protein zeste (268 aa).

A DNA-binding region spans residues 1–72; it reads TAEEKEVLYT…WLNSRLRKQY (72 aa). A compositionally biased stretch (low complexity) spans 94 to 108; sequence VSVASAVPQQQQQQH. The tract at residues 94–133 is disordered; that stretch reads VSVASAVPQQQQQQHHQQHDNVKEEPEYQISPDASEHNPQ. A compositionally biased stretch (basic and acidic residues) spans 110–119; the sequence is QQHDNVKEEP.

In terms of assembly, self-associates forming complexes of several hundred monomers.

Its subcellular location is the nucleus. In terms of biological role, involved in transvection phenomena (= synapsis-dependent gene expression), where the synaptic pairing of chromosomes carrying genes with which zeste interacts influences the expression of these genes. Zeste binds to DNA and stimulates transcription from a nearby promoter. The chain is Regulatory protein zeste (z) from Drosophila sechellia (Fruit fly).